The sequence spans 742 residues: Synaptic vesicle glycoprotein 2A (742 aa).

Residues 1 to 57 are interaction with SYT1; it reads MEEGFRDRAAFIRGAKDIAKEVKKHAAKKVVKGLDRVQDEYSRRSYSRFEEEDDDDD. Residues 1 to 169 lie on the Cytoplasmic side of the membrane; it reads MEEGFRDRAA…GHGRFQWTLY (169 aa). The span at 33–49 shows a compositional bias: basic and acidic residues; the sequence is GLDRVQDEYSRRSYSRF. Residues 33-144 are disordered; the sequence is GLDRVQDEYS…GRGEAQRRKE (112 aa). 2 positions are modified to phosphoserine: S80 and S81. The residue at position 84 (T84) is a Phosphothreonine. Gly residues predominate over residues 122-137; sequence VRGGLSDGEGPPGGRG. Position 127 is a phosphoserine (S127). Residues 170-190 form a helical membrane-spanning segment; that stretch reads FVLGLALMADGVEVFVVGFVL. Residues 191–205 lie on the Extracellular side of the membrane; the sequence is PSAEKDMCLSDSNKG. A helical membrane pass occupies residues 206–226; that stretch reads MLGLIVYLGMMVGAFLWGGLA. Over 227 to 233 the chain is Cytoplasmic; sequence DRLGRRQ. The chain crosses the membrane as a helical span at residues 234–254; it reads CLLISLSVNSVFAFFSSFVQG. Residues 255 to 262 are Extracellular-facing; the sequence is YGTFLFCR. Residues 263–283 traverse the membrane as a helical segment; the sequence is LLSGVGIGGSIPIVFSYFSEF. Residues 284–294 are Cytoplasmic-facing; the sequence is LAQEKRGEHLS. Residues 295–315 form a helical membrane-spanning segment; sequence WLCMFWMIGGVYAAAMAWAII. The Extracellular segment spans residues 316–334; it reads PHYGWSFQMGSAYQFHSWR. Residues 335 to 355 traverse the membrane as a helical segment; it reads VFVLVCAFPSVFAIGALTTQP. Topologically, residues 356-447 are cytoplasmic; that stretch reads ESPRFFLENG…CFGPEYRRIT (92 aa). A Phosphoserine modification is found at S393. Residues 448-468 form a helical membrane-spanning segment; sequence LMMMGVWFTMSFSYYGLTVWF. At 469 to 598 the chain is on the extracellular side; it reads PDMIRHLQAV…GTGEGAYMVY (130 aa). Y480 carries the phosphotyrosine modification. N-linked (GlcNAc...) asparagine glycosylation is found at N498, N548, and N573. Residues 599–619 traverse the membrane as a helical segment; sequence FVSFLGTLAVLPGNIVSALLM. Residues 620–626 are Cytoplasmic-facing; it reads DKIGRLR. The chain crosses the membrane as a helical span at residues 627–647; it reads MLAGSSVMSCVSCFFLSFGNS. Topologically, residues 648 to 651 are extracellular; that stretch reads ESAM. A helical membrane pass occupies residues 652 to 672; that stretch reads IALLCLFGGVSIASWNALDVL. At 673–685 the chain is on the cytoplasmic side; that stretch reads TVELYPSDKRTTA. Residues 686–708 form a helical membrane-spanning segment; that stretch reads FGFLNALCKLAAVLGISIFTSFV. Topologically, residues 709 to 712 are extracellular; it reads GITK. The helical transmembrane segment at 713-731 threads the bilayer; sequence AAPILFASAALALGSSLAL. Residues 732–742 are Cytoplasmic-facing; it reads KLPETRGQVLQ.

This sequence belongs to the major facilitator superfamily. As to quaternary structure, interacts with SYT1/synaptotagmin-1 in a calcium-dependent manner. Binds the adapter protein complex AP-2. (Microbial infection) Interacts with C.botulinum neurotoxin type A2 (BoNT/A, botA). Interaction is improved by glycosylation of SV2. In terms of processing, phosphorylation by CK1 of the N-terminal cytoplasmic domain regulates interaction with SYT1. N-glycosylated.

The protein resides in the presynapse. The protein localises to the cytoplasmic vesicle. It is found in the secretory vesicle. It localises to the synaptic vesicle membrane. In terms of biological role, plays a role in the control of regulated secretion in neural and endocrine cells, enhancing selectively low-frequency neurotransmission. Positively regulates vesicle fusion by maintaining the readily releasable pool of secretory vesicles. (Microbial infection) Receptor for the C.botulinum neurotoxin type A2 (BoNT/A, botA); glycosylation is not essential but enhances the interaction. Probably also serves as a receptor for the closely related C.botulinum neurotoxin type A1. The sequence is that of Synaptic vesicle glycoprotein 2A (SV2A) from Homo sapiens (Human).